Here is a 401-residue protein sequence, read N- to C-terminus: Imidazolonepropionase (401 aa).

Residues His66 and His68 each contribute to the Fe(3+) site. The Zn(2+) site is built by His66 and His68. Residues Arg75, Tyr138, and His171 each contribute to the 4-imidazolone-5-propanoate site. Tyr138 contributes to the N-formimidoyl-L-glutamate binding site. Fe(3+) is bound at residue His236. His236 contacts Zn(2+). Gln239 lines the 4-imidazolone-5-propanoate pocket. Asp311 is a binding site for Fe(3+). Asp311 is a Zn(2+) binding site. Asn313 and Gly315 together coordinate N-formimidoyl-L-glutamate. Thr316 provides a ligand contact to 4-imidazolone-5-propanoate.

Belongs to the metallo-dependent hydrolases superfamily. HutI family. Zn(2+) is required as a cofactor. Requires Fe(3+) as cofactor.

Its subcellular location is the cytoplasm. The enzyme catalyses 4-imidazolone-5-propanoate + H2O = N-formimidoyl-L-glutamate. It functions in the pathway amino-acid degradation; L-histidine degradation into L-glutamate; N-formimidoyl-L-glutamate from L-histidine: step 3/3. In terms of biological role, catalyzes the hydrolytic cleavage of the carbon-nitrogen bond in imidazolone-5-propanoate to yield N-formimidoyl-L-glutamate. It is the third step in the universal histidine degradation pathway. The polypeptide is Imidazolonepropionase (Acinetobacter baumannii (strain ACICU)).